A 429-amino-acid polypeptide reads, in one-letter code: 4-hydroxyphenylacetate degradation bifunctional isomerase/decarboxylase (429 aa).

Approximate repeat units follow at residues 1 to 215 and 216 to 429; these read MKGT…RKSF and PTLP…ETAK. Residues E276, E278, and D307 each coordinate a divalent metal cation.

This sequence belongs to the FAH family. Monomer. It depends on Mg(2+) as a cofactor.

It catalyses the reaction (2E,4Z)-5-hydroxypenta-2,4-diene-1,2,5-tricarboxylate = (3E,5R)-5-carboxy-2-oxohept-3-enedioate. The enzyme catalyses (3E,5R)-5-carboxy-2-oxohept-3-enedioate + H(+) = (4Z)-2-oxohept-4-enedioate + CO2. Its pathway is aromatic compound metabolism; 4-hydroxyphenylacetate degradation; pyruvate and succinate semialdehyde from 4-hydroxyphenylacetate: step 4/7. It functions in the pathway aromatic compound metabolism; 4-hydroxyphenylacetate degradation; pyruvate and succinate semialdehyde from 4-hydroxyphenylacetate: step 5/7. Decarboxylates OPET (5-oxo-pent-3-ene-1,2,5-tricarboxylic acid) into HHDD (2-hydroxy-hept-2,4-diene-1,7-dioate) and isomerizes it to OHED (2-oxo-hept-3-ene-1,7-dioate). The sequence is that of 4-hydroxyphenylacetate degradation bifunctional isomerase/decarboxylase (hpaG) from Escherichia coli.